A 425-amino-acid chain; its full sequence is Dipeptidase tcpJ (425 aa).

Residues His46, Asp48, and Glu158 each coordinate Zn(2+). His185, Arg259, and Asp318 together coordinate substrate.

It belongs to the metallo-dependent hydrolases superfamily. Peptidase M19 family. The cofactor is Zn(2+).

It carries out the reaction an L-aminoacyl-L-amino acid + H2O = 2 an L-alpha-amino acid. In terms of biological role, dipeptidase; part of the gene cluster that mediates the biosynthesis of an unusual class of epipolythiodioxopiperazines (ETPs) lacking the reactive thiol group important for toxicity. Firstly, L-tyrosine is prenylated by tcpD, before undergoing condensation with L-glycine in a reaction catalyzed by the NRPS tcpP leading to the diketopiperazine (DKP) backbone. Afterwards the alpha-carbon of tyrosine is oxidized by the cytochrome P450 tcpC to form a hydroxyl group. However, in contrast other ETP biosynthesis pathways studied so far, tcpC is not able to bishydroxylate the DKP at both alpha-carbon positions, but hydroxylates the alpha-carbon of the tyrosine part and the nitrogen of the glycine part. The next steps involve an alpha,beta-elimination reaction catalyzed by tcpI, a methylation by the methyltransferase tcpN the action of the four enzyme cascade tcpG/K/J/I. Due to a dysfunctional cytochrome P450 monooxygenase tcpC, the pathway leads to the biosynthesis of probable non-toxic metabolites lacking the reactive thiol group. This Claviceps purpurea (strain 20.1) (Ergot fungus) protein is Dipeptidase tcpJ.